The following is a 235-amino-acid chain: Non-structural maintenance of chromosomes element 1 homolog (235 aa).

The segment at 181-225 (IKNCTLCKCLVLWDIRCGSCNIQYHRGCIQTYLQRRDICPSCGNL) adopts an RING-type; atypical zinc-finger fold. The residue at position 185 (threonine 185) is a Phosphothreonine.

It belongs to the NSE1 family. Component of the Smc5-Smc6 complex which consists at least of Smc5, Smc6, Nse1, Nse2, Nse4 and MAGE. Nse1, Nse4 and MAGE probably form a subcomplex that bridges the head domains of the Smc5-Smc6 heterodimer. Interacts with MAGE and Nse4.

Its subcellular location is the nucleus. It catalyses the reaction S-ubiquitinyl-[E2 ubiquitin-conjugating enzyme]-L-cysteine + [acceptor protein]-L-lysine = [E2 ubiquitin-conjugating enzyme]-L-cysteine + N(6)-ubiquitinyl-[acceptor protein]-L-lysine.. Component of the SMC5-SMC6 complex, a complex involved in repair of DNA double-strand breaks by homologous recombination. The complex may promote sister chromatid homologous recombination by recruiting the SMC1-SMC3 cohesin complex to double-strand breaks. The chain is Non-structural maintenance of chromosomes element 1 homolog from Drosophila melanogaster (Fruit fly).